A 252-amino-acid chain; its full sequence is uncharacterized protein (252 aa).

The protein localises to the plastid. Its subcellular location is the chloroplast. This is an uncharacterized protein from Guillardia theta (Cryptophyte).